The chain runs to 296 residues: Formamidopyrimidine-DNA glycosylase (296 aa).

Pro-2 (schiff-base intermediate with DNA) is an active-site residue. The active-site Proton donor is the Glu-3. The active-site Proton donor; for beta-elimination activity is the Lys-61. Positions 95, 122, and 169 each coordinate DNA. Residues 255–289 (NAYGRNDQPCARCGTPIQRETFMNRSSYSCPRCQP) form an FPG-type zinc finger. Arg-279 (proton donor; for delta-elimination activity) is an active-site residue.

This sequence belongs to the FPG family. In terms of assembly, monomer. Requires Zn(2+) as cofactor.

It carries out the reaction Hydrolysis of DNA containing ring-opened 7-methylguanine residues, releasing 2,6-diamino-4-hydroxy-5-(N-methyl)formamidopyrimidine.. It catalyses the reaction 2'-deoxyribonucleotide-(2'-deoxyribose 5'-phosphate)-2'-deoxyribonucleotide-DNA = a 3'-end 2'-deoxyribonucleotide-(2,3-dehydro-2,3-deoxyribose 5'-phosphate)-DNA + a 5'-end 5'-phospho-2'-deoxyribonucleoside-DNA + H(+). Its function is as follows. Involved in base excision repair of DNA damaged by oxidation or by mutagenic agents. Acts as a DNA glycosylase that recognizes and removes damaged bases. Has a preference for oxidized purines, such as 7,8-dihydro-8-oxoguanine (8-oxoG). Has AP (apurinic/apyrimidinic) lyase activity and introduces nicks in the DNA strand. Cleaves the DNA backbone by beta-delta elimination to generate a single-strand break at the site of the removed base with both 3'- and 5'-phosphates. The sequence is that of Formamidopyrimidine-DNA glycosylase from Thermobifida fusca (strain YX).